The sequence spans 360 residues: Squamosa promoter-binding-like protein 7 (360 aa).

Gly residues predominate over residues alanine 74–alanine 89. Residues alanine 74–alanine 98 form a disordered region. An SBP-type zinc finger spans residues valine 105–serine 182. Zn(2+)-binding residues include cysteine 108, cysteine 113, cysteine 130, histidine 133, cysteine 149, cysteine 152, histidine 156, and cysteine 168. Positions lysine 165–arginine 181 match the Bipartite nuclear localization signal motif. Positions leucine 172 to serine 182 are enriched in basic residues. 3 disordered regions span residues leucine 172–histidine 196, phenylalanine 261–glutamine 306, and alanine 320–valine 360.

Expressed in young panicles.

The protein resides in the nucleus. Its function is as follows. Trans-acting factor that binds specifically to the consensus nucleotide sequence 5'-TNCGTACAA-3'. May be involved in panicle development. The polypeptide is Squamosa promoter-binding-like protein 7 (SPL7) (Oryza sativa subsp. indica (Rice)).